The sequence spans 274 residues: Large ribosomal subunit protein uL2 (274 aa).

The segment at 224 to 256 is disordered; that stretch reads VMNPVDHPHGGGEGKTGEGRHPVDPWGNLTKGY. The span at 229–246 shows a compositional bias: basic and acidic residues; the sequence is DHPHGGGEGKTGEGRHPV.

Belongs to the universal ribosomal protein uL2 family. Part of the 50S ribosomal subunit. Forms a bridge to the 30S subunit in the 70S ribosome.

Functionally, one of the primary rRNA binding proteins. Required for association of the 30S and 50S subunits to form the 70S ribosome, for tRNA binding and peptide bond formation. It has been suggested to have peptidyltransferase activity; this is somewhat controversial. Makes several contacts with the 16S rRNA in the 70S ribosome. In Polaromonas sp. (strain JS666 / ATCC BAA-500), this protein is Large ribosomal subunit protein uL2.